Here is a 229-residue protein sequence, read N- to C-terminus: UPF0488 protein C8orf33 (229 aa).

The span at 1–16 shows a compositional bias: low complexity; sequence MAALGHLAGEAAAAPG. Residues 1–96 form a disordered region; sequence MAALGHLAGE…GEKASEKLAP (96 aa). A2 is modified (N-acetylalanine). Residue R27 is modified to Omega-N-methylarginine. Over residues 69 to 79 the composition is skewed to basic residues; the sequence is KKQKNKKKTRN. S82 bears the Phosphoserine mark.

It belongs to the UPF0488 family.

The polypeptide is UPF0488 protein C8orf33 (C8orf33) (Homo sapiens (Human)).